A 590-amino-acid polypeptide reads, in one-letter code: Arginine--tRNA ligase (590 aa).

The 'HIGH' region signature appears at 126–136 (PNVAKEMHVGH).

The protein belongs to the class-I aminoacyl-tRNA synthetase family. Monomer.

It localises to the cytoplasm. The enzyme catalyses tRNA(Arg) + L-arginine + ATP = L-arginyl-tRNA(Arg) + AMP + diphosphate. The polypeptide is Arginine--tRNA ligase (Streptomyces avermitilis (strain ATCC 31267 / DSM 46492 / JCM 5070 / NBRC 14893 / NCIMB 12804 / NRRL 8165 / MA-4680)).